A 468-amino-acid polypeptide reads, in one-letter code: COBRA-like protein 5 (468 aa).

The signal sequence occupies residues 1–22; it reads MELHRCSLLALLLAVTCSVAVA. N-linked (GlcNAc...) asparagine glycosylation is found at N31, N156, N164, and N228. The disordered stretch occupies residues 251 to 278; sequence GGGKNARAGDGRSRRNSGGGGGHSGGTE. Residues N340, N355, and N374 are each glycosylated (N-linked (GlcNAc...) asparagine). A lipid anchor (GPI-anchor amidated asparagine) is attached at N443. Positions 444–468 are cleaved as a propeptide — removed in mature form; that stretch reads SAPIGPPRSVAAAASAILVVLLLVA.

Belongs to the COBRA family. In terms of tissue distribution, expressed mainly in developing sclerenchyma cells and in vascular bundles.

It localises to the cell membrane. Functionally, involved in determining the orientation of cell expansion, probably by playing an important role in cellulose deposition. May act by recruiting cellulose synthesizing complexes to discrete positions on the cell surface. The polypeptide is COBRA-like protein 5 (BC1) (Oryza sativa subsp. indica (Rice)).